The sequence spans 365 residues: 3-isopropylmalate dehydrogenase (365 aa).

4 residues coordinate substrate: Arg-96, Arg-106, Arg-134, and Asp-224. Residues Asp-224, Asp-248, and Asp-252 each coordinate Mg(2+). 288–300 (GSAPTIAKQNIAN) serves as a coordination point for NAD(+).

Belongs to the isocitrate and isopropylmalate dehydrogenases family. LeuB type 1 subfamily. Homodimer. Requires Mg(2+) as cofactor. The cofactor is Mn(2+).

It localises to the cytoplasm. It carries out the reaction (2R,3S)-3-isopropylmalate + NAD(+) = 4-methyl-2-oxopentanoate + CO2 + NADH. It functions in the pathway amino-acid biosynthesis; L-leucine biosynthesis; L-leucine from 3-methyl-2-oxobutanoate: step 3/4. Functionally, catalyzes the oxidation of 3-carboxy-2-hydroxy-4-methylpentanoate (3-isopropylmalate) to 3-carboxy-4-methyl-2-oxopentanoate. The product decarboxylates to 4-methyl-2 oxopentanoate. The chain is 3-isopropylmalate dehydrogenase from Dehalococcoides mccartyi (strain CBDB1).